We begin with the raw amino-acid sequence, 320 residues long: Beta-ketoacyl-[acyl-carrier-protein] synthase III (320 aa).

Catalysis depends on residues Cys112 and His245. The ACP-binding stretch occupies residues 246-250 (QANIR). The active site involves Asn275.

Belongs to the thiolase-like superfamily. FabH family. In terms of assembly, homodimer.

The protein resides in the cytoplasm. The catalysed reaction is malonyl-[ACP] + acetyl-CoA + H(+) = 3-oxobutanoyl-[ACP] + CO2 + CoA. Its pathway is lipid metabolism; fatty acid biosynthesis. Functionally, catalyzes the condensation reaction of fatty acid synthesis by the addition to an acyl acceptor of two carbons from malonyl-ACP. Catalyzes the first condensation reaction which initiates fatty acid synthesis and may therefore play a role in governing the total rate of fatty acid production. Possesses both acetoacetyl-ACP synthase and acetyl transacylase activities. Its substrate specificity determines the biosynthesis of branched-chain and/or straight-chain of fatty acids. The sequence is that of Beta-ketoacyl-[acyl-carrier-protein] synthase III from Streptococcus thermophilus (strain CNRZ 1066).